A 462-amino-acid polypeptide reads, in one-letter code: Alkaline ceramidase TOD1 (462 aa).

Over 1–18 (MGKFITTTLSPPLYARSK) the chain is Cytoplasmic. A helical transmembrane segment spans residues 19–39 (LLCFSLLYLFSTIFLFLYVSL). Residues 40–462 (SRNQCIFRYS…CKNYLTDMWG (423 aa)) lie on the Lumenal side of the membrane. N121, N132, and N449 each carry an N-linked (GlcNAc...) asparagine glycan.

This sequence belongs to the alkaline ceramidase family. In terms of tissue distribution, preferentially expressed in pollen grains, pollen tubes and silique guard cells, but barely detectable in roots, stems and leaves.

The protein localises to the golgi apparatus membrane. It catalyses the reaction an N-acylsphing-4-enine + H2O = sphing-4-enine + a fatty acid. Its pathway is lipid metabolism. Endoplasmic reticulum ceramidase that catalyzes the hydrolysis of ceramides into sphingosine and free fatty acids at alkaline pH (e.g. pH 9.5). Inactive on phytoceramide. Involved in the regulation of turgor pressure in guard cells and pollen tubes. The polypeptide is Alkaline ceramidase TOD1 (Arabidopsis thaliana (Mouse-ear cress)).